The following is an 89-amino-acid chain: MTKIKTVTFVNTYPGGSMKNLLDTEGTVLFPFQTEIHFIWTIFSTVKRLVIGTRDHICQKQYWSACLCILLLMAYVGLCAAVVWFVVPC.

The protein localises to the cell membrane. ABI may interact with a target in the cell membrane, which could be the product of the host's cmrA gene, and cause disruption of the cellular membrane such that lysis of the infected cell and death of the infecting phage would result. The sequence is that of Abortive infection protein (abi) from Escherichia coli.